Here is a 383-residue protein sequence, read N- to C-terminus: Putative glutamate--cysteine ligase 2-1 (383 aa).

This sequence belongs to the glutamate--cysteine ligase type 2 family. YbdK subfamily.

The catalysed reaction is L-cysteine + L-glutamate + ATP = gamma-L-glutamyl-L-cysteine + ADP + phosphate + H(+). Functionally, ATP-dependent carboxylate-amine ligase which exhibits weak glutamate--cysteine ligase activity. The sequence is that of Putative glutamate--cysteine ligase 2-1 from Arthrobacter sp. (strain FB24).